Reading from the N-terminus, the 191-residue chain is Cell division protein SepF (191 aa).

The segment covering 151–165 has biased composition (low complexity); sequence SSSPEEASPSSVPTE. A disordered region spans residues 151–191; that stretch reads SSSPEEASPSSVPTENTPQYSLGKNTTPEPAWGNSKLSAYS. Residues 166-178 are compositionally biased toward polar residues; that stretch reads NTPQYSLGKNTTP.

This sequence belongs to the SepF family. As to quaternary structure, homodimer. Interacts with FtsZ.

The protein resides in the cytoplasm. Its function is as follows. Cell division protein that is part of the divisome complex and is recruited early to the Z-ring. Probably stimulates Z-ring formation, perhaps through the cross-linking of FtsZ protofilaments. Its function overlaps with FtsA. The polypeptide is Cell division protein SepF (Prochlorococcus marinus (strain MIT 9215)).